We begin with the raw amino-acid sequence, 440 residues long: tRNA modification GTPase MnmE (440 aa).

Residues arginine 22, glutamate 79, and lysine 118 each contribute to the (6S)-5-formyl-5,6,7,8-tetrahydrofolate site. The region spanning 214–366 (GLIFTILGKP…LKTMLEAEAR (153 aa)) is the TrmE-type G domain. Residues 224–229 (NAGKSS), 243–249 (SSQPGTT), and 268–271 (DTAG) contribute to the GTP site. Residues serine 228 and threonine 249 each coordinate Mg(2+). Lysine 440 is a (6S)-5-formyl-5,6,7,8-tetrahydrofolate binding site.

The protein belongs to the TRAFAC class TrmE-Era-EngA-EngB-Septin-like GTPase superfamily. TrmE GTPase family. As to quaternary structure, homodimer. Heterotetramer of two MnmE and two MnmG subunits. K(+) serves as cofactor.

Its subcellular location is the cytoplasm. Its function is as follows. Exhibits a very high intrinsic GTPase hydrolysis rate. Involved in the addition of a carboxymethylaminomethyl (cmnm) group at the wobble position (U34) of certain tRNAs, forming tRNA-cmnm(5)s(2)U34. In Granulibacter bethesdensis (strain ATCC BAA-1260 / CGDNIH1), this protein is tRNA modification GTPase MnmE.